A 317-amino-acid polypeptide reads, in one-letter code: Cytochrome c biogenesis protein CcsA (317 aa).

The next 8 membrane-spanning stretches (helical) occupy residues 9–29 (ILTH…LITF), 46–63 (TATA…WVYS), 71–91 (LYES…IFDF), 98–118 (LSAI…SGFL), 143–163 (MVLG…LLVI), 225–245 (IISL…VWAN), 258–273 (ETWA…IYLH), and 286–306 (AIVA…VNLL).

The protein belongs to the CcmF/CycK/Ccl1/NrfE/CcsA family. As to quaternary structure, may interact with Ccs1.

Its subcellular location is the plastid. It localises to the chloroplast thylakoid membrane. Functionally, required during biogenesis of c-type cytochromes (cytochrome c6 and cytochrome f) at the step of heme attachment. The chain is Cytochrome c biogenesis protein CcsA from Citrus sinensis (Sweet orange).